The sequence spans 322 residues: tRNA dimethylallyltransferase (322 aa).

ATP is bound at residue 12 to 19 (GPTAAGKT). Residue 14 to 19 (TAAGKT) coordinates substrate. Interaction with substrate tRNA regions lie at residues 37-40 (DSAL) and 160-164 (QRLIR).

This sequence belongs to the IPP transferase family. As to quaternary structure, monomer. It depends on Mg(2+) as a cofactor.

The enzyme catalyses adenosine(37) in tRNA + dimethylallyl diphosphate = N(6)-dimethylallyladenosine(37) in tRNA + diphosphate. Catalyzes the transfer of a dimethylallyl group onto the adenine at position 37 in tRNAs that read codons beginning with uridine, leading to the formation of N6-(dimethylallyl)adenosine (i(6)A). The protein is tRNA dimethylallyltransferase of Pseudomonas putida (Arthrobacter siderocapsulatus).